Reading from the N-terminus, the 205-residue chain is Holliday junction branch migration complex subunit RuvA (205 aa).

The domain I stretch occupies residues 1–64 (MIGRLRGVLV…EDAQLLYGFI (64 aa)). The domain II stretch occupies residues 65-143 (TKQERALFRL…SLMEASAGSE (79 aa)). The tract at residues 144–156 (REFVLQSNYSPTP) is flexible linker. Positions 157–205 (TVNSAEEDAISALISLGYKPPQASKSVSAAYKEGMDSETLIKAALKSML) are domain III.

Belongs to the RuvA family. Homotetramer. Forms an RuvA(8)-RuvB(12)-Holliday junction (HJ) complex. HJ DNA is sandwiched between 2 RuvA tetramers; dsDNA enters through RuvA and exits via RuvB. An RuvB hexamer assembles on each DNA strand where it exits the tetramer. Each RuvB hexamer is contacted by two RuvA subunits (via domain III) on 2 adjacent RuvB subunits; this complex drives branch migration. In the full resolvosome a probable DNA-RuvA(4)-RuvB(12)-RuvC(2) complex forms which resolves the HJ.

Its subcellular location is the cytoplasm. In terms of biological role, the RuvA-RuvB-RuvC complex processes Holliday junction (HJ) DNA during genetic recombination and DNA repair, while the RuvA-RuvB complex plays an important role in the rescue of blocked DNA replication forks via replication fork reversal (RFR). RuvA specifically binds to HJ cruciform DNA, conferring on it an open structure. The RuvB hexamer acts as an ATP-dependent pump, pulling dsDNA into and through the RuvAB complex. HJ branch migration allows RuvC to scan DNA until it finds its consensus sequence, where it cleaves and resolves the cruciform DNA. This Shewanella sp. (strain W3-18-1) protein is Holliday junction branch migration complex subunit RuvA.